The sequence spans 240 residues: UDP-2,3-diacylglucosamine hydrolase (240 aa).

5 residues coordinate Mn(2+): Asp8, His10, Asp41, Asn79, and His114. Residue 79–80 (NR) participates in substrate binding. Positions 122, 160, 164, 167, and 195 each coordinate substrate. Mn(2+)-binding residues include His195 and His197.

Belongs to the LpxH family. Mn(2+) is required as a cofactor.

It is found in the cell inner membrane. It carries out the reaction UDP-2-N,3-O-bis[(3R)-3-hydroxytetradecanoyl]-alpha-D-glucosamine + H2O = 2-N,3-O-bis[(3R)-3-hydroxytetradecanoyl]-alpha-D-glucosaminyl 1-phosphate + UMP + 2 H(+). It participates in glycolipid biosynthesis; lipid IV(A) biosynthesis; lipid IV(A) from (3R)-3-hydroxytetradecanoyl-[acyl-carrier-protein] and UDP-N-acetyl-alpha-D-glucosamine: step 4/6. In terms of biological role, hydrolyzes the pyrophosphate bond of UDP-2,3-diacylglucosamine to yield 2,3-diacylglucosamine 1-phosphate (lipid X) and UMP by catalyzing the attack of water at the alpha-P atom. Involved in the biosynthesis of lipid A, a phosphorylated glycolipid that anchors the lipopolysaccharide to the outer membrane of the cell. This is UDP-2,3-diacylglucosamine hydrolase from Klebsiella pneumoniae subsp. pneumoniae (strain ATCC 700721 / MGH 78578).